Here is a 327-residue protein sequence, read N- to C-terminus: DNA primase large subunit PriL (327 aa).

Residues C218, C290, C299, and C307 each contribute to the [4Fe-4S] cluster site.

It belongs to the eukaryotic-type primase large subunit family. In terms of assembly, heterodimer of a small subunit (PriS) and a large subunit (PriL). [4Fe-4S] cluster is required as a cofactor.

Regulatory subunit of DNA primase, an RNA polymerase that catalyzes the synthesis of short RNA molecules used as primers for DNA polymerase during DNA replication. Stabilizes and modulates the activity of the small subunit, increasing the rate of DNA synthesis, and conferring RNA synthesis capability. The DNA polymerase activity may enable DNA primase to also catalyze primer extension after primer synthesis. May also play a role in DNA repair. The sequence is that of DNA primase large subunit PriL from Thermoplasma volcanium (strain ATCC 51530 / DSM 4299 / JCM 9571 / NBRC 15438 / GSS1).